The chain runs to 277 residues: F420-dependent methylenetetrahydromethanopterin dehydrogenase (277 aa).

This sequence belongs to the MTD family.

The catalysed reaction is 5,10-methylenetetrahydromethanopterin + oxidized coenzyme F420-(gamma-L-Glu)(n) + 2 H(+) = 5,10-methenyl-5,6,7,8-tetrahydromethanopterin + reduced coenzyme F420-(gamma-L-Glu)(n). It participates in one-carbon metabolism; methanogenesis from CO(2); 5,10-methylene-5,6,7,8-tetrahydromethanopterin from 5,10-methenyl-5,6,7,8-tetrahydromethanopterin (coenzyme F420 route): step 1/1. Catalyzes the reversible reduction of methenyl-H(4)MPT(+) to methylene-H(4)MPT. This is F420-dependent methylenetetrahydromethanopterin dehydrogenase from Methanococcus maripaludis (strain C5 / ATCC BAA-1333).